We begin with the raw amino-acid sequence, 146 residues long: MGFTEKQEALVNSSWELFKQNPSYSVLFYTIILKKAPAAKGMFSFLKDSAEVVDSPKLQAHAEKVFGMVHDSAIQLRASGEVVLGDATLGAIHIQKGVVDPHFVVVKEALLETIKEASGEKWSEELSTAWEVAYEGLASAIKKAMN.

Residues glycine 2–asparagine 146 form the Globin domain. Nitrated tyrosine occurs at positions 24 and 29. Position 44 (serine 44) interacts with heme b. Serine 44 is subject to Phosphoserine. Histidine 61 is an O2 binding site. Positions 64, 93, and 96 each coordinate heme b. Residue tyrosine 134 is modified to Nitrated tyrosine.

This sequence belongs to the plant globin family. Monomer. Post-translationally, nitrated in effective nodules and particularly in hypoxic conditions; this mechanism may play a protective role in the symbiosis by buffering toxic peroxynitrite NO(2)(-). Nitration level decrease during nodule senescence. Phosphorylation at Ser-44 disrupts the molecular environment of its porphyrin ring oxygen binding pocket, thus leading to a reduced oxygen consumption and to the delivery of oxygen O(2) to symbiosomes. Root nodules.

The protein localises to the cytoplasm. It is found in the cytosol. It localises to the nucleus. Leghemoglobin that reversibly binds oxygen O(2) through a pentacoordinated heme iron. In root nodules, facilitates the diffusion of oxygen to the bacteroids while preventing the bacterial nitrogenase from being inactivated by buffering dioxygen, nitric oxide and carbon monoxide, and promoting the formation of reactive oxygen species (ROS, e.g. H(2)O(2)). This role is essential for symbiotic nitrogen fixation (SNF). The protein is Leghemoglobin Lb120-34 of Pisum sativum (Garden pea).